The following is a 302-amino-acid chain: Cuticle collagen dpy-13 (302 aa).

Triple-helical region regions lie at residues 106–135 (GPQG…PGKA), 154–210 (GPPG…EGLP), and 219–278 (GEPG…PGTP). Residues 108-284 (QGAPGAPGKP…PGTPGERGIC (177 aa)) are disordered. Over residues 144–159 (TPPPCKPCPQGPPGAP) the composition is skewed to pro residues. Over residues 188-197 (PKGPNGAPGK) the composition is skewed to low complexity. 2 stretches are compositionally biased toward pro residues: residues 247-257 (QPGPKGPPGPD) and 268-277 (QPGPVGPPGT).

Belongs to the cuticular collagen family. In terms of assembly, collagen polypeptide chains are complexed within the cuticle by disulfide bonds and other types of covalent cross-links.

In terms of biological role, nematode cuticles are composed largely of collagen-like proteins. The cuticle functions both as an exoskeleton and as a barrier to protect the worm from its environment. Mutations in dpy-13 affects the body shape. The polypeptide is Cuticle collagen dpy-13 (dpy-13) (Caenorhabditis elegans).